A 329-amino-acid chain; its full sequence is Red chlorophyll catabolite reductase 1, chloroplastic (329 aa).

A compositionally biased stretch (pro residues) spans 1 to 11; that stretch reads MLQLRSPPPAT. A chloroplast-targeting transit peptide spans 1-50; that stretch reads MLQLRSPPPATSSPSSAVSFPTLAPRLLPLRRRRRGAGSQLGGKTSSAVR. The disordered stretch occupies residues 1–61; the sequence is MLQLRSPPPA…SSAAAPGATE (61 aa). 2 stretches are compositionally biased toward low complexity: residues 12-28 and 46-59; these read SSPS…PRLL and SSAV…APGA. Red chlorophyll catabolite contacts are provided by residues E163, 216–218, and D299; that span reads YRS.

In terms of tissue distribution, expressed in leaves. Expressed at low levels in roots, stems, panicles and seeds.

The protein resides in the plastid. It is found in the chloroplast. It carries out the reaction primary fluorescent chlorophyll catabolite + 2 oxidized [2Fe-2S]-[ferredoxin] = red chlorophyll catabolite + 2 reduced [2Fe-2S]-[ferredoxin] + 3 H(+). The protein operates within porphyrin-containing compound metabolism; chlorophyll degradation. Its function is as follows. Catalyzes the key reaction of chlorophyll catabolism, porphyrin macrocycle cleavage of pheophorbide a (pheide a) to a primary fluorescent catabolite (pFCC). Works in a two-step reaction with pheophorbide a oxygenase (PaO) by reducing the C20/C1 double bond of the intermediate, RCC. Belongs to the chlorophyll catabolic enzymes (CCEs). May play a role in senescence and response to wounding. This chain is Red chlorophyll catabolite reductase 1, chloroplastic, found in Oryza sativa subsp. japonica (Rice).